A 139-amino-acid polypeptide reads, in one-letter code: D-ribose pyranase (139 aa).

The active-site Proton donor is His20. Residues Asp28, His106, and 128–130 (YAN) each bind substrate.

The protein belongs to the RbsD / FucU family. RbsD subfamily. Homodecamer.

It localises to the cytoplasm. It catalyses the reaction beta-D-ribopyranose = beta-D-ribofuranose. Its pathway is carbohydrate metabolism; D-ribose degradation; D-ribose 5-phosphate from beta-D-ribopyranose: step 1/2. Catalyzes the interconversion of beta-pyran and beta-furan forms of D-ribose. This Actinobacillus pleuropneumoniae serotype 7 (strain AP76) protein is D-ribose pyranase.